A 402-amino-acid chain; its full sequence is uncharacterized protein (402 aa).

The signal sequence occupies residues 1-44 (MLEKNLLPEILLAIHMPLNKGLTRVKAIVIIIVVIIAVIAGVVG). The interval 53 to 79 (NSVTTSSSSTTTSSSLSSTSISSSTTN) is disordered.

This sequence belongs to the bacterial solute-binding protein 1 family. WtpA subfamily.

This is an uncharacterized protein from Saccharolobus solfataricus (strain ATCC 35092 / DSM 1617 / JCM 11322 / P2) (Sulfolobus solfataricus).